Reading from the N-terminus, the 151-residue chain is Putative pre-16S rRNA nuclease (151 aa).

Belongs to the YqgF nuclease family.

Its subcellular location is the cytoplasm. Functionally, could be a nuclease involved in processing of the 5'-end of pre-16S rRNA. The chain is Putative pre-16S rRNA nuclease from Paraburkholderia phymatum (strain DSM 17167 / CIP 108236 / LMG 21445 / STM815) (Burkholderia phymatum).